The sequence spans 86 residues: Neurotoxin 3FTx-RK (86 aa).

The N-terminal stretch at 1-21 is a signal peptide; it reads MKTLLLTLVVVTIVCLELGYT. Intrachain disulfides connect cysteine 24–cysteine 45, cysteine 38–cysteine 63, cysteine 67–cysteine 78, and cysteine 79–cysteine 84.

As to expression, expressed by the venom gland.

The protein resides in the secreted. This Bungarus fasciatus (Banded krait) protein is Neurotoxin 3FTx-RK.